The primary structure comprises 253 residues: Phosphate import ATP-binding protein PstB (253 aa).

The ABC transporter domain maps to Ile7–Ile248. Gly39 to Ser46 provides a ligand contact to ATP.

This sequence belongs to the ABC transporter superfamily. Phosphate importer (TC 3.A.1.7) family. As to quaternary structure, the complex is composed of two ATP-binding proteins (PstB), two transmembrane proteins (PstC and PstA) and a solute-binding protein (PstS).

The protein resides in the cell membrane. The catalysed reaction is phosphate(out) + ATP + H2O = ADP + 2 phosphate(in) + H(+). Part of the ABC transporter complex PstSACB involved in phosphate import. Responsible for energy coupling to the transport system. The protein is Phosphate import ATP-binding protein PstB of Carboxydothermus hydrogenoformans (strain ATCC BAA-161 / DSM 6008 / Z-2901).